A 156-amino-acid polypeptide reads, in one-letter code: Small ribosomal subunit protein uS7 (156 aa).

Belongs to the universal ribosomal protein uS7 family. In terms of assembly, part of the 30S ribosomal subunit. Contacts proteins S9 and S11.

One of the primary rRNA binding proteins, it binds directly to 16S rRNA where it nucleates assembly of the head domain of the 30S subunit. Is located at the subunit interface close to the decoding center, probably blocks exit of the E-site tRNA. This is Small ribosomal subunit protein uS7 from Streptomyces griseus subsp. griseus (strain JCM 4626 / CBS 651.72 / NBRC 13350 / KCC S-0626 / ISP 5235).